Consider the following 337-residue polypeptide: Serpentine receptor class alpha-17 (337 aa).

A run of 6 helical transmembrane segments spans residues 28 to 48 (LNFVFIATVIFLSFYFAGLAI), 110 to 130 (ELYFYYLTNYFSTYAVFSLTF), 155 to 175 (IIQLLLSLSTYYVGLYGVPLV), 197 to 217 (FRTATMVFCIIVTIFIYYLSV), 247 to 267 (CILIVLQFACIMLSSFGVNYI), and 282 to 302 (IAPFFPGVTYASLCLPLVIYF).

The protein belongs to the nematode receptor-like protein sra family.

It localises to the membrane. The sequence is that of Serpentine receptor class alpha-17 (sra-17) from Caenorhabditis elegans.